Consider the following 497-residue polypeptide: Casein kinase I isoform delta (497 aa).

Disordered regions lie at residues 1 to 58 (MATM…EEMN) and 86 to 109 (PIQQ…HPTQ). Polar residues predominate over residues 14 to 34 (WHNNTSTPMDTTEPATNSHNP). Over residues 88 to 105 (QQHQQPPLLQQAQPSQIP) the composition is skewed to low complexity. One can recognise a Protein kinase domain in the interval 191–458 (FRLGRKIGSG…YLRNLFRTLF (268 aa)). ATP-binding positions include 197-205 (IGSGSFGDI) and Lys-220. The Proton acceptor role is filled by Asp-310.

Belongs to the protein kinase superfamily. CK1 Ser/Thr protein kinase family. Casein kinase I subfamily. In terms of assembly, monomer. In terms of tissue distribution, expressed throughout larval development and into the adult stage in both hypodermal seam cells and the hermaphrodite specific neuron.

Its subcellular location is the cytoplasm. The protein resides in the nucleus. It is found in the chromosome. It localises to the centromere. The protein localises to the cell junction. Its subcellular location is the adherens junction. The catalysed reaction is L-seryl-[protein] + ATP = O-phospho-L-seryl-[protein] + ADP + H(+). It catalyses the reaction L-threonyl-[protein] + ATP = O-phospho-L-threonyl-[protein] + ADP + H(+). Exhibits substrate-dependent heparin activation. Functionally, essential serine/threonine-protein kinase that regulates diverse cellular growth and survival processes including Wnt signaling, DNA repair and circadian rhythms. Casein kinases are operationally defined by their preferential utilization of acidic proteins. Positively regulates the expression of components of the heterochronic pathway, which regulate developmental timing, such as the transcriptional repressor lin-42 and microRNAs such as let-7. Negatively regulates cell cycle exit and cell fusion to prevent the premature differentiation of hypodermal seam cells into adult cells. Plays a role in regulating axon branching and subsequently, the maturation of the nervous system, most likely by preventing the premature termination of transcripts for proteins such as Ankyrin/unc-44, which are required for maintaining the nervous system. May phosphorylate ssup-72 to promote nervous system maturation. In Caenorhabditis elegans, this protein is Casein kinase I isoform delta.